Consider the following 271-residue polypeptide: Proteasome inhibitor PI31 subunit (271 aa).

Alanine 2 is modified (N-acetylalanine). Positions alanine 2 to asparagine 150 are important for homodimerization and interaction with FBXO7. Serine 153 carries the post-translational modification Phosphoserine. The residue at position 205 (arginine 205) is an Omega-N-methylarginine. Asymmetric dimethylarginine is present on arginine 219. Positions isoleucine 222–leucine 271 are disordered. Arginine 231 carries the post-translational modification Omega-N-methylarginine. Pro residues predominate over residues threonine 251 to glycine 265. Residue serine 252 is modified to Phosphoserine.

This sequence belongs to the proteasome inhibitor PI31 family. Monomer and homodimer. Interacts with FBXO7. Interacts with the 20S proteasome.

The protein resides in the cytoplasm. Its subcellular location is the endoplasmic reticulum. Functionally, plays an important role in control of proteasome function. Inhibits the hydrolysis of protein and peptide substrates by the 20S proteasome. Also inhibits the activation of the proteasome by the proteasome regulatory proteins PA700 and PA28. This chain is Proteasome inhibitor PI31 subunit (PSMF1), found in Homo sapiens (Human).